A 138-amino-acid chain; its full sequence is von Willebrand factor C domain-containing protein 2-like (138 aa).

Residues 1–21 form the signal peptide; the sequence is MALHIHEACILLLVIPGLVTS. One can recognise a VWFC domain in the interval 51–110; it reads KGCVDDSGFVYKLGERFFPGHSNCPCVCALDGPVCDQPECPKIHPKCTKVEHNGCCPECK.

In terms of assembly, peripherally associated with AMPAR complex. AMPAR complex consists of an inner core made of 4 pore-forming GluA/GRIA proteins (GRIA1, GRIA2, GRIA3 and GRIA4) and 4 major auxiliary subunits arranged in a twofold symmetry. One of the two pairs of distinct binding sites is occupied either by CNIH2, CNIH3 or CACNG2, CACNG3. The other harbors CACNG2, CACNG3, CACNG4, CACNG8 or GSG1L. This inner core of AMPAR complex is complemented by outer core constituents binding directly to the GluA/GRIA proteins at sites distinct from the interaction sites of the inner core constituents. Outer core constituents include at least PRRT1, PRRT2, CKAMP44/SHISA9, FRRS1L and NRN1. The proteins of the inner and outer core serve as a platform for other, more peripherally associated AMPAR constituents, including VWC2L. Alone or in combination, these auxiliary subunits control the gating and pharmacology of the AMPAR complex and profoundly impact their biogenesis and protein processing.

It is found in the secreted. Its subcellular location is the synapse. Functionally, may play a role in neurogenesis. May play a role in bone differentiation and matrix mineralization. The sequence is that of von Willebrand factor C domain-containing protein 2-like (VWC2L) from Macaca fascicularis (Crab-eating macaque).